The following is a 249-amino-acid chain: 2,3-bisphosphoglycerate-dependent phosphoglycerate mutase (249 aa).

Substrate is bound by residues 8–15 (RHGESVWN), 21–22 (TG), Arg60, 87–90 (ERHY), Lys98, 114–115 (RR), and 183–184 (GN). The active-site Tele-phosphohistidine intermediate is His9. The Proton donor/acceptor role is filled by Glu87.

This sequence belongs to the phosphoglycerate mutase family. BPG-dependent PGAM subfamily.

It carries out the reaction (2R)-2-phosphoglycerate = (2R)-3-phosphoglycerate. Its pathway is carbohydrate degradation; glycolysis; pyruvate from D-glyceraldehyde 3-phosphate: step 3/5. Functionally, catalyzes the interconversion of 2-phosphoglycerate and 3-phosphoglycerate. This is 2,3-bisphosphoglycerate-dependent phosphoglycerate mutase from Endomicrobium trichonymphae.